A 150-amino-acid chain; its full sequence is Guanine nucleotide-binding protein subunit gamma 2 (150 aa).

The segment covering 1–11 has biased composition (acidic residues); sequence MRGEANGEEEQ. The interval 1 to 59 is disordered; sequence MRGEANGEEEQQPPRRNHLRDDAEEEEEVERRAARPVSGQQQQQQRRRPTDVGGGAAMR. Positions 65–97 form a coiled coil; sequence GKHRLSAAIARLDQELQSLQDELNELETMEPAS. The G protein gamma domain occupies 71-137; the sequence is AAIARLDQEL…RWFQRVRSSR (67 aa).

In terms of assembly, g proteins are composed of 3 units, alpha, beta and gamma. Interacts with the beta subunit RGB1.

It is found in the cell membrane. Its function is as follows. Guanine nucleotide-binding proteins (G proteins) are involved as modulators or transducers in various transmembrane signaling systems. The sequence is that of Guanine nucleotide-binding protein subunit gamma 2 from Oryza sativa subsp. indica (Rice).